Here is a 129-residue protein sequence, read N- to C-terminus: Glycine cleavage system H protein (129 aa).

In terms of domain architecture, Lipoyl-binding spans 24–106 (TVVVGVTSYA…YGDGWLIKVR (83 aa)). Lys-65 is modified (N6-lipoyllysine).

Belongs to the GcvH family. As to quaternary structure, the glycine cleavage system is composed of four proteins: P, T, L and H. (R)-lipoate is required as a cofactor.

The glycine cleavage system catalyzes the degradation of glycine. The H protein shuttles the methylamine group of glycine from the P protein to the T protein. This Gloeobacter violaceus (strain ATCC 29082 / PCC 7421) protein is Glycine cleavage system H protein.